A 211-amino-acid polypeptide reads, in one-letter code: Thiamine-phosphate synthase (211 aa).

4-amino-2-methyl-5-(diphosphooxymethyl)pyrimidine is bound by residues 37 to 41 (QLRIK) and Asn69. Asp70 and Asp89 together coordinate Mg(2+). Position 108 (Ser108) interacts with 4-amino-2-methyl-5-(diphosphooxymethyl)pyrimidine. Residue 134–136 (TQT) coordinates 2-[(2R,5Z)-2-carboxy-4-methylthiazol-5(2H)-ylidene]ethyl phosphate. Residue Lys137 participates in 4-amino-2-methyl-5-(diphosphooxymethyl)pyrimidine binding. Residues Gly166 and 186-187 (VS) contribute to the 2-[(2R,5Z)-2-carboxy-4-methylthiazol-5(2H)-ylidene]ethyl phosphate site.

The protein belongs to the thiamine-phosphate synthase family. Requires Mg(2+) as cofactor.

The enzyme catalyses 2-[(2R,5Z)-2-carboxy-4-methylthiazol-5(2H)-ylidene]ethyl phosphate + 4-amino-2-methyl-5-(diphosphooxymethyl)pyrimidine + 2 H(+) = thiamine phosphate + CO2 + diphosphate. It carries out the reaction 2-(2-carboxy-4-methylthiazol-5-yl)ethyl phosphate + 4-amino-2-methyl-5-(diphosphooxymethyl)pyrimidine + 2 H(+) = thiamine phosphate + CO2 + diphosphate. The catalysed reaction is 4-methyl-5-(2-phosphooxyethyl)-thiazole + 4-amino-2-methyl-5-(diphosphooxymethyl)pyrimidine + H(+) = thiamine phosphate + diphosphate. The protein operates within cofactor biosynthesis; thiamine diphosphate biosynthesis; thiamine phosphate from 4-amino-2-methyl-5-diphosphomethylpyrimidine and 4-methyl-5-(2-phosphoethyl)-thiazole: step 1/1. Its function is as follows. Condenses 4-methyl-5-(beta-hydroxyethyl)thiazole monophosphate (THZ-P) and 2-methyl-4-amino-5-hydroxymethyl pyrimidine pyrophosphate (HMP-PP) to form thiamine monophosphate (TMP). This chain is Thiamine-phosphate synthase, found in Escherichia coli O139:H28 (strain E24377A / ETEC).